The following is a 312-amino-acid chain: Putative ring-cleaving dioxygenase MhqO (312 aa).

VOC domains follow at residues 7–131 and 152–269; these read GIHH…IVER and GFGG…IATD. Fe cation-binding residues include His10, His217, and Glu265.

The protein belongs to the extradiol ring-cleavage dioxygenase family. The cofactor is Fe(2+).

It is found in the cytoplasm. Functionally, putative ring-cleavage dioxygenase that may contribute to the degradation of aromatic compounds. The protein is Putative ring-cleaving dioxygenase MhqO (mhqO) of Bacillus subtilis (strain 168).